Consider the following 55-residue polypeptide: Large ribosomal subunit protein bL33 (55 aa).

The protein belongs to the bacterial ribosomal protein bL33 family.

The sequence is that of Large ribosomal subunit protein bL33 from Rhodopseudomonas palustris (strain HaA2).